The sequence spans 558 residues: Glucose-6-phosphate isomerase (558 aa).

N-acetylalanine is present on alanine 2. Lysine 12 is subject to N6-acetyllysine. Residues serine 86 and serine 107 each carry the phosphoserine modification. At lysine 142 the chain carries N6-acetyllysine. Position 159-160 (159-160 (GS)) interacts with D-glucose 6-phosphate. The residue at position 185 (serine 185) is a Phosphoserine; by CK2. Residue 210–215 (SKTFTT) participates in D-glucose 6-phosphate binding. The residue at position 250 (threonine 250) is a Phosphothreonine. D-glucose 6-phosphate is bound by residues glutamine 354, glutamate 358, and histidine 389. Glutamate 358 serves as the catalytic Proton donor. The active site involves histidine 389. The residue at position 454 (lysine 454) is an N6-acetyllysine; alternate. Lysine 454 is modified (N6-malonyllysine; alternate). Lysine 454 bears the N6-succinyllysine; alternate mark. Position 455 is a phosphoserine (serine 455). D-glucose 6-phosphate is bound at residue lysine 519. Residue lysine 519 is part of the active site.

The protein belongs to the GPI family. In terms of assembly, homodimer; in the catalytically active form. Monomer in the secreted form. Phosphorylation at Ser-185 by CK2 has been shown to decrease enzymatic activity and may contribute to secretion by a non-classical secretory pathway. In terms of processing, ISGylated.

Its subcellular location is the cytoplasm. The protein resides in the secreted. It carries out the reaction alpha-D-glucose 6-phosphate = beta-D-fructose 6-phosphate. It participates in carbohydrate degradation; glycolysis; D-glyceraldehyde 3-phosphate and glycerone phosphate from D-glucose: step 2/4. Functionally, in the cytoplasm, catalyzes the conversion of glucose-6-phosphate to fructose-6-phosphate, the second step in glycolysis, and the reverse reaction during gluconeogenesis. Besides it's role as a glycolytic enzyme, also acts as a secreted cytokine: acts as an angiogenic factor (AMF) that stimulates endothelial cell motility. Acts as a neurotrophic factor, neuroleukin, for spinal and sensory neurons. It is secreted by lectin-stimulated T-cells and induces immunoglobulin secretion. This is Glucose-6-phosphate isomerase from Rattus norvegicus (Rat).